Reading from the N-terminus, the 502-residue chain is L-amino-acid oxidase BmooLAAO-I (502 aa).

The signal sequence occupies residues 1-18; the sequence is MNVFFTFSLLFLAALGSC. Cys-28 and Cys-191 are joined by a disulfide. FAD is bound by residues 61–62, 81–82, Arg-89, and 105–108; these read MS, EA, and GPMR. A substrate-binding site is contributed by Arg-108. Residue Asn-190 is glycosylated (N-linked (GlcNAc...) asparagine). A substrate-binding site is contributed by His-241. Val-279 contacts FAD. Cys-349 and Cys-430 are joined by a disulfide. Tyr-390 contributes to the substrate binding site. FAD contacts are provided by residues Glu-475 and 482–487; that span reads GWIDST. 482–483 is a substrate binding site; that stretch reads GW.

It belongs to the flavin monoamine oxidase family. FIG1 subfamily. As to quaternary structure, homodimer; non-covalently linked. Requires FAD as cofactor. Post-translationally, N-glycosylated. The enzymatic activity is not affected by deglycosylation. Expressed by the venom gland.

Its subcellular location is the secreted. It catalyses the reaction an L-alpha-amino acid + O2 + H2O = a 2-oxocarboxylate + H2O2 + NH4(+). It carries out the reaction L-leucine + O2 + H2O = 4-methyl-2-oxopentanoate + H2O2 + NH4(+). The enzyme catalyses L-phenylalanine + O2 + H2O = 3-phenylpyruvate + H2O2 + NH4(+). The catalysed reaction is L-tryptophan + O2 + H2O = indole-3-pyruvate + H2O2 + NH4(+). It catalyses the reaction L-methionine + O2 + H2O = 4-methylsulfanyl-2-oxobutanoate + H2O2 + NH4(+). It carries out the reaction L-isoleucine + O2 + H2O = (S)-3-methyl-2-oxopentanoate + H2O2 + NH4(+). The enzyme catalyses L-histidine + O2 + H2O = 3-(imidazol-5-yl)pyruvate + H2O2 + NH4(+). The catalysed reaction is L-tyrosine + O2 + H2O = 3-(4-hydroxyphenyl)pyruvate + H2O2 + NH4(+). It catalyses the reaction L-alanine + O2 + H2O = pyruvate + H2O2 + NH4(+). It carries out the reaction L-valine + O2 + H2O = 3-methyl-2-oxobutanoate + H2O2 + NH4(+). Its enzymatic activities is reduced when it is exposed to Ca(2+), Zn(2+), Al(3+), Cu(2+) or Ni(2+) salts. Catalyzes an oxidative deamination of predominantly hydrophobic and aromatic L-amino acids, thus producing hydrogen peroxide that may contribute to the toxicity of the venom. Shows very high activity on L-Met, and L-Leu, high activity on L-Ile, L-Phe and L-Tyr and moderate activity on L-His, L-Val and L-Ala. Exhibits diverse biological activities, such as edema, apoptosis of tumor cell lines, antibacterial activities against both Gram-positive and Gram-negative bacteria, as well as induction of platelet aggregation. Effects of snake L-amino oxidases on platelets are controversial, since they either induce aggregation or inhibit agonist-induced aggregation. These different effects are probably due to different experimental conditions. Unlike other snake venom L-amino acid oxidases, does not induce hemorrhage. It may also induce hemolysis. Has parasiticidal activities against and leishmania, as a result of enzyme-catalyzed hydrogen peroxide production. The protein is L-amino-acid oxidase BmooLAAO-I of Bothrops moojeni (Lance-headed viper).